The following is a 449-amino-acid chain: Gamma-glutamyl phosphate reductase (449 aa).

Belongs to the gamma-glutamyl phosphate reductase family.

It is found in the cytoplasm. The enzyme catalyses L-glutamate 5-semialdehyde + phosphate + NADP(+) = L-glutamyl 5-phosphate + NADPH + H(+). It functions in the pathway amino-acid biosynthesis; L-proline biosynthesis; L-glutamate 5-semialdehyde from L-glutamate: step 2/2. Its function is as follows. Catalyzes the NADPH-dependent reduction of L-glutamate 5-phosphate into L-glutamate 5-semialdehyde and phosphate. The product spontaneously undergoes cyclization to form 1-pyrroline-5-carboxylate. This is Gamma-glutamyl phosphate reductase from Methanococcoides burtonii (strain DSM 6242 / NBRC 107633 / OCM 468 / ACE-M).